Consider the following 269-residue polypeptide: Protein MGF 110-1L (269 aa).

The first 26 residues, 1 to 26 (MLGLQIFTLLSIPTLLYTYELELLDL), serve as a signal peptide directing secretion. One copy of the A repeat lies at 1 to 145 (MLGLQIFTLL…YVRKRSLQTV (145 aa)). The Extracellular segment spans residues 27–116 (TRTPPEKELE…HEWHEAVIRK (90 aa)). A glycan (N-linked (GlcNAc...) asparagine; by host) is linked at asparagine 75. A helical transmembrane segment spans residues 117–137 (WQKLLTYGFYLVGCVLVANYV). Residues 138–144 (RKRSLQT) lie on the Cytoplasmic side of the membrane. Residues 145–165 (VMYLLVLLVIFFLLSQLMLYR) form a helical membrane-spanning segment. The B repeat unit spans residues 147–269 (YLLVLLVIFF…DNLMKKQDIM (123 aa)). Over 166–269 (ELEDKKHKIG…DNLMKKQDIM (104 aa)) the chain is Extracellular.

It belongs to the asfivirus MGF 110 family.

It localises to the host membrane. In terms of biological role, plays a role in virus cell tropism, and may be required for efficient virus replication in macrophages. This African swine fever virus (isolate Warthog/Namibia/Wart80/1980) (ASFV) protein is Protein MGF 110-1L.